A 298-amino-acid chain; its full sequence is Acetyl-coenzyme A carboxylase carboxyl transferase subunit beta (298 aa).

Positions 1-21 (MNQEVKSGKVLSPSTPWTQRP) are disordered. The C4-type zinc-finger motif lies at 20 to 67 (RPVPGIEVADEQQTLKATFTEPTIECPECHALVTRTAISFNAYVCPQC). In terms of domain architecture, CoA carboxyltransferase N-terminal spans 41-298 (PTIECPECHA…RLVSKLMNLP (258 aa)). Residues C45, C48, C64, and C67 each coordinate Zn(2+).

Belongs to the AccD/PCCB family. Acetyl-CoA carboxylase is a heterohexamer composed of biotin carboxyl carrier protein (AccB), biotin carboxylase (AccC) and two subunits each of ACCase subunit alpha (AccA) and ACCase subunit beta (AccD). It depends on Zn(2+) as a cofactor.

The protein localises to the cytoplasm. It carries out the reaction N(6)-carboxybiotinyl-L-lysyl-[protein] + acetyl-CoA = N(6)-biotinyl-L-lysyl-[protein] + malonyl-CoA. It participates in lipid metabolism; malonyl-CoA biosynthesis; malonyl-CoA from acetyl-CoA: step 1/1. Component of the acetyl coenzyme A carboxylase (ACC) complex. Biotin carboxylase (BC) catalyzes the carboxylation of biotin on its carrier protein (BCCP) and then the CO(2) group is transferred by the transcarboxylase to acetyl-CoA to form malonyl-CoA. The sequence is that of Acetyl-coenzyme A carboxylase carboxyl transferase subunit beta from Acinetobacter baumannii (strain SDF).